Consider the following 301-residue polypeptide: ATP synthase gamma chain (301 aa).

This sequence belongs to the ATPase gamma chain family. In terms of assembly, F-type ATPases have 2 components, CF(1) - the catalytic core - and CF(0) - the membrane proton channel. CF(1) has five subunits: alpha(3), beta(3), gamma(1), delta(1), epsilon(1). CF(0) has three main subunits: a, b and c.

It is found in the cell inner membrane. In terms of biological role, produces ATP from ADP in the presence of a proton gradient across the membrane. The gamma chain is believed to be important in regulating ATPase activity and the flow of protons through the CF(0) complex. The protein is ATP synthase gamma chain of Helicobacter pylori (strain P12).